The sequence spans 48 residues: Sulfide dehydrogenase [flavocytochrome c] flavoprotein chain (48 aa).

An FAD-binding site is contributed by 40–46 (VTCPFSN).

As to quaternary structure, dimer of one cytochrome and one flavoprotein.

It localises to the periplasm. It catalyses the reaction hydrogen sulfide + 2 Fe(III)-[cytochrome c] = sulfur + 2 Fe(II)-[cytochrome c] + H(+). This chain is Sulfide dehydrogenase [flavocytochrome c] flavoprotein chain, found in Chlorobaculum thiosulfatiphilum (Chlorobium limicola f.sp. thiosulfatophilum).